A 161-amino-acid polypeptide reads, in one-letter code: Nucleotide-binding protein Shal_3198 (161 aa).

The protein belongs to the YajQ family.

Functionally, nucleotide-binding protein. This chain is Nucleotide-binding protein Shal_3198, found in Shewanella halifaxensis (strain HAW-EB4).